The following is a 241-amino-acid chain: 2-C-methyl-D-erythritol 4-phosphate cytidylyltransferase (241 aa).

It belongs to the IspD/TarI cytidylyltransferase family. IspD subfamily. In terms of assembly, homodimer.

The enzyme catalyses 2-C-methyl-D-erythritol 4-phosphate + CTP + H(+) = 4-CDP-2-C-methyl-D-erythritol + diphosphate. The protein operates within isoprenoid biosynthesis; isopentenyl diphosphate biosynthesis via DXP pathway; isopentenyl diphosphate from 1-deoxy-D-xylulose 5-phosphate: step 2/6. Functionally, catalyzes the formation of 4-diphosphocytidyl-2-C-methyl-D-erythritol from CTP and 2-C-methyl-D-erythritol 4-phosphate (MEP). This chain is 2-C-methyl-D-erythritol 4-phosphate cytidylyltransferase, found in Yersinia pestis.